Reading from the N-terminus, the 493-residue chain is Geraniol 8-hydroxylase (493 aa).

The Lumenal portion of the chain corresponds to 1–6; it reads MDYLTI. Residues 7 to 23 form a helical membrane-spanning segment; it reads ILTLLFALTLYEAFSYL. Residues 24–493 are Cytoplasmic-facing; the sequence is SRRTKNLPPG…HPLRAVPSTL (470 aa). Cys-436 is a heme binding site.

Belongs to the cytochrome P450 family. Heme is required as a cofactor. In terms of tissue distribution, expressed in roots, stems, leaves and flower buds. Hardly detected in mature flowers and fruits. Expressed in the internal phloem-associated parenchyma.

The protein resides in the endoplasmic reticulum membrane. It catalyses the reaction (2E)-geraniol + reduced [NADPH--hemoprotein reductase] + O2 = (6E)-8-hydroxygeraniol + oxidized [NADPH--hemoprotein reductase] + H2O + H(+). Hydroxylase involved in the biosynthesis of hydroxygeraniol, a precursor of the terpenoid indole alkaloids such as vinblastine and vincristine. Also able to hydroxylate in vitro nerol and to catalyze 3'-hydroxylation of the flavanone naringenin to form eriodictyol. No activity with apigenin, kaempferol, p-coumaric acid and ferulic acid as substrates. This is Geraniol 8-hydroxylase (CYP76B6) from Catharanthus roseus (Madagascar periwinkle).